We begin with the raw amino-acid sequence, 172 residues long: Adenine phosphoribosyltransferase (172 aa).

Belongs to the purine/pyrimidine phosphoribosyltransferase family. As to quaternary structure, homodimer.

The protein localises to the cytoplasm. It catalyses the reaction AMP + diphosphate = 5-phospho-alpha-D-ribose 1-diphosphate + adenine. Its pathway is purine metabolism; AMP biosynthesis via salvage pathway; AMP from adenine: step 1/1. Catalyzes a salvage reaction resulting in the formation of AMP, that is energically less costly than de novo synthesis. The polypeptide is Adenine phosphoribosyltransferase (Streptococcus agalactiae serotype Ia (strain ATCC 27591 / A909 / CDC SS700)).